A 187-amino-acid polypeptide reads, in one-letter code: Putative adenylate kinase (187 aa).

The ATP site is built by glycine 10, glycine 12, lysine 13, threonine 14, and isoleucine 15. The interval 30–53 (SLSQFVIENKLYTEYDELRQSYII) is NMP. Positions 103–113 (GRGWADIKVAE) are LID. Residue arginine 104 coordinates ATP.

This sequence belongs to the adenylate kinase family. AK6 subfamily. Interacts with uS11. Not a structural component of 40S pre-ribosomes, but transiently interacts with them by binding to uS11.

The enzyme catalyses AMP + ATP = 2 ADP. It carries out the reaction ATP + H2O = ADP + phosphate + H(+). Functionally, broad-specificity nucleoside monophosphate (NMP) kinase that catalyzes the reversible transfer of the terminal phosphate group between nucleoside triphosphates and monophosphates. Also has ATPase activity. Involved in the late maturation steps of the 30S ribosomal particles, specifically 16S rRNA maturation. While NMP activity is not required for ribosome maturation, ATPase activity is. Associates transiently with small ribosomal subunit protein uS11. ATP hydrolysis breaks the interaction with uS11. May temporarily remove uS11 from the ribosome to enable a conformational change of the ribosomal RNA that is needed for the final maturation step of the small ribosomal subunit. The protein is Putative adenylate kinase of Saccharolobus islandicus (strain L.S.2.15 / Lassen #1) (Sulfolobus islandicus).